The sequence spans 427 residues: uncharacterized protein (427 aa).

The stretch at 135–168 (PILKQKLVSLESKVKKIDKEMEKHNDLLKEIQEN) forms a coiled coil.

This is an uncharacterized protein from Arabidopsis thaliana (Mouse-ear cress).